We begin with the raw amino-acid sequence, 261 residues long: Chanoclavine-I dehydrogenase easD (261 aa).

The N-terminal stretch at 1–20 is a signal peptide; that stretch reads MPSMTSKVFAITGGASGIGA. NADP(+) is bound at residue Ile18. A glycan (N-linked (GlcNAc...) asparagine) is linked at Asn43. The NADP(+) site is built by Asp66, Arg132, Tyr166, Lys170, and Thr201. Tyr166 functions as the Proton donor in the catalytic mechanism. The Lowers pKa of active site Tyr role is filled by Lys170.

The protein belongs to the short-chain dehydrogenases/reductases (SDR) family. As to quaternary structure, homotetramer.

The enzyme catalyses chanoclavine-I + NAD(+) = chanoclavine-I aldehyde + NADH + H(+). Its pathway is alkaloid biosynthesis; ergot alkaloid biosynthesis. Chanoclavine-I dehydrogenase; part of the gene cluster that mediates the biosynthesis of fungal ergot alkaloid. DmaW catalyzes the first step of ergot alkaloid biosynthesis by condensing dimethylallyl diphosphate (DMAP) and tryptophan to form 4-dimethylallyl-L-tryptophan. The second step is catalyzed by the methyltransferase easF that methylates 4-dimethylallyl-L-tryptophan in the presence of S-adenosyl-L-methionine, resulting in the formation of 4-dimethylallyl-L-abrine. The catalase easC and the FAD-dependent oxidoreductase easE then transform 4-dimethylallyl-L-abrine to chanoclavine-I which is further oxidized by easD in the presence of NAD(+), resulting in the formation of chanoclavine-I aldehyde. Agroclavine dehydrogenase easG then mediates the conversion of chanoclavine-I aldehyde to agroclavine via a non-enzymatic adduct reaction: the substrate is an iminium intermediate that is formed spontaneously from chanoclavine-I aldehyde in the presence of glutathione. The presence of easA is not required to complete this reaction. Further conversion of agroclavine to paspalic acid is a two-step process involving oxidation of agroclavine to elymoclavine and of elymoclavine to paspalic acid, the second step being performed by the elymoclavine oxidase cloA. Paspalic acid is then further converted to D-lysergic acid. Ergopeptines are assembled from D-lysergic acid and three different amino acids by the D-lysergyl-peptide-synthetases composed each of a monomudular and a trimodular nonribosomal peptide synthetase subunit. LpsB and lpsC encode the monomodular subunits responsible for D-lysergic acid activation and incorporation into the ergopeptine backbone. LpsA1 and A2 subunits encode the trimodular nonribosomal peptide synthetase assembling the tripeptide portion of ergopeptines. LpsA1 is responsible for formation of the major ergopeptine, ergotamine, and lpsA2 for alpha-ergocryptine, the minor ergopeptine of the total alkaloid mixture elaborated by C.purpurea. D-lysergyl-tripeptides are assembled by the nonribosomal peptide synthetases and released as N-(D-lysergyl-aminoacyl)-lactams. Cyclolization of the D-lysergyl-tripeptides is performed by the Fe(2+)/2-ketoglutarate-dependent dioxygenase easH which introduces a hydroxyl group into N-(D-lysergyl-aminoacyl)-lactam at alpha-C of the aminoacyl residue followed by spontaneous condensation with the terminal lactam carbonyl group. The sequence is that of Chanoclavine-I dehydrogenase easD from Claviceps purpurea (strain 20.1) (Ergot fungus).